Here is a 445-residue protein sequence, read N- to C-terminus: Probable fructoselysine/psicoselysine transporter FrlA (445 aa).

The next 11 helical transmembrane spans lie at 10–32 (LGFW…FVSV), 39–61 (AGTP…PQMC), 97–119 (FWAN…LGFL), 126–143 (LGKF…LLHL), 153–175 (QTLI…IFWF), 188–210 (IGAT…SYTG), 230–252 (RALI…VISG), 272–294 (WIPA…VILG), 341–363 (GIFF…VMCF), 384–406 (LWRT…ILVA), and 411–433 (WAPI…AYAF).

It belongs to the amino acid-polyamine-organocation (APC) superfamily.

It localises to the cell inner membrane. It carries out the reaction N(6)-(D-fructosyl)-L-lysine(in) = N(6)-(D-fructosyl)-L-lysine(out). The enzyme catalyses N(6)-(D-psicosyl)-L-lysine(in) = N(6)-(D-psicosyl)-L-lysine(out). It participates in carbohydrate metabolism; fructoselysine degradation. Its function is as follows. Is likely involved in the transport of fructoselysine and psicoselysine to the cytoplasm, where they are degraded. This Escherichia coli O157:H7 protein is Probable fructoselysine/psicoselysine transporter FrlA (frlA).